The sequence spans 343 residues: Dihydroorotase (343 aa).

Residues histidine 13 and histidine 15 each coordinate Zn(2+). Substrate is bound by residues 15–17 and asparagine 41; that span reads HLR. Residues lysine 99, histidine 136, and histidine 174 each coordinate Zn(2+). Lysine 99 is modified (N6-carboxylysine). Histidine 136 contributes to the substrate binding site. Leucine 219 is a binding site for substrate. Aspartate 247 lines the Zn(2+) pocket. Aspartate 247 is a catalytic residue. Substrate-binding residues include histidine 251 and alanine 263.

The protein belongs to the metallo-dependent hydrolases superfamily. DHOase family. Class II DHOase subfamily. Homodimer. Requires Zn(2+) as cofactor.

The enzyme catalyses (S)-dihydroorotate + H2O = N-carbamoyl-L-aspartate + H(+). The protein operates within pyrimidine metabolism; UMP biosynthesis via de novo pathway; (S)-dihydroorotate from bicarbonate: step 3/3. Its function is as follows. Catalyzes the reversible cyclization of carbamoyl aspartate to dihydroorotate. This is Dihydroorotase from Shewanella oneidensis (strain ATCC 700550 / JCM 31522 / CIP 106686 / LMG 19005 / NCIMB 14063 / MR-1).